The primary structure comprises 679 residues: Methionine--tRNA ligase (679 aa).

The 'HIGH' region signature appears at 15-25 (PYANGSIHLGH). Positions 146, 149, 159, and 162 each coordinate Zn(2+). The 'KMSKS' region signature appears at 332 to 336 (KMSKS). An ATP-binding site is contributed by Lys335. In terms of domain architecture, tRNA-binding spans 577-679 (DFAKVDMRVA…AGALPGMPVK (103 aa)).

This sequence belongs to the class-I aminoacyl-tRNA synthetase family. MetG type 1 subfamily. As to quaternary structure, homodimer. Zn(2+) is required as a cofactor.

The protein localises to the cytoplasm. The catalysed reaction is tRNA(Met) + L-methionine + ATP = L-methionyl-tRNA(Met) + AMP + diphosphate. Its function is as follows. Is required not only for elongation of protein synthesis but also for the initiation of all mRNA translation through initiator tRNA(fMet) aminoacylation. This Sodalis glossinidius (strain morsitans) protein is Methionine--tRNA ligase.